An 824-amino-acid polypeptide reads, in one-letter code: Acyl-homoserine lactone acylase QuiP (824 aa).

An N-terminal signal peptide occupies residues 1-26 (MASPALRHFLPRFGAAAAAASFLSLA). S264 serves as the catalytic Nucleophile.

This sequence belongs to the peptidase S45 family. As to quaternary structure, heterodimer of an alpha subunit and a beta subunit processed from the same precursor.

The protein resides in the periplasm. It catalyses the reaction an N-acyl-L-homoserine lactone + H2O = L-homoserine lactone + a carboxylate. In terms of biological role, catalyzes the deacylation of acyl-homoserine lactone (AHL or acyl-HSL), releasing homoserine lactone (HSL) and the corresponding fatty acid. Possesses a specificity for the degradation of long-chain acyl-HSLs (side chains of seven or more carbons in length). The chain is Acyl-homoserine lactone acylase QuiP (quiP) from Pseudomonas syringae pv. tomato (strain ATCC BAA-871 / DC3000).